A 423-amino-acid chain; its full sequence is Sulfate adenylyltransferase (423 aa).

Residues Gln207 and Arg209 each contribute to the sulfate site. ATP-binding positions include 207–210 and 301–304; these read QLRN and GRDH. Active-site residues include Arg209 and Asn210. Residue Ala305 coordinates sulfate.

Belongs to the sulfate adenylyltransferase family.

The protein resides in the mitosome. The enzyme catalyses sulfate + ATP + H(+) = adenosine 5'-phosphosulfate + diphosphate. It functions in the pathway sulfur metabolism; hydrogen sulfide biosynthesis; sulfite from sulfate: step 1/3. Functionally, catalyzes the first intracellular reaction of sulfate assimilation, forming adenosine-5'-phosphosulfate (APS) from inorganic sulfate and ATP. The chain is Sulfate adenylyltransferase from Entamoeba histolytica (strain ATCC 30459 / HM-1:IMSS / ABRM).